The sequence spans 642 residues: Chaperone protein HtpG (642 aa).

The segment at 1–349 is a; substrate-binding; the sequence is MSAATETEVR…SADLPLNVSR (349 aa). A disordered region spans residues 216-238; that stretch reads ELPPAPPAKEGEEPEPPKTPEWE. Residues 224–236 are compositionally biased toward basic and acidic residues; that stretch reads KEGEEPEPPKTPE. Positions 350–570 are b; sequence EILQQNRQVE…AHDMSATLER (221 aa). The tract at residues 571 to 642 is c; it reads LLKEAGQEVP…VKRLNKLLMG (72 aa).

Belongs to the heat shock protein 90 family. As to quaternary structure, homodimer.

The protein localises to the cytoplasm. Functionally, molecular chaperone. Has ATPase activity. The polypeptide is Chaperone protein HtpG (Magnetococcus marinus (strain ATCC BAA-1437 / JCM 17883 / MC-1)).